The sequence spans 337 residues: Ribosomal RNA small subunit methyltransferase H (337 aa).

Residues 45-47 (GGH), D64, F91, D120, and Q127 each bind S-adenosyl-L-methionine.

This sequence belongs to the methyltransferase superfamily. RsmH family.

The protein resides in the cytoplasm. The catalysed reaction is cytidine(1402) in 16S rRNA + S-adenosyl-L-methionine = N(4)-methylcytidine(1402) in 16S rRNA + S-adenosyl-L-homocysteine + H(+). Its function is as follows. Specifically methylates the N4 position of cytidine in position 1402 (C1402) of 16S rRNA. The sequence is that of Ribosomal RNA small subunit methyltransferase H from Corynebacterium glutamicum (strain R).